The sequence spans 270 residues: Orotidine 5'-phosphate decarboxylase (270 aa).

Lys89 (proton donor) is an active-site residue.

It belongs to the OMP decarboxylase family. Type 2 subfamily.

It catalyses the reaction orotidine 5'-phosphate + H(+) = UMP + CO2. It functions in the pathway pyrimidine metabolism; UMP biosynthesis via de novo pathway; UMP from orotate: step 2/2. This chain is Orotidine 5'-phosphate decarboxylase, found in Dehalococcoides mccartyi (strain ATCC BAA-2100 / JCM 16839 / KCTC 5957 / BAV1).